A 685-amino-acid polypeptide reads, in one-letter code: DNA ligase (685 aa).

NAD(+) contacts are provided by residues 34-38 (DAVFD), 83-84 (SL), and Glu113. Residue Lys115 is the N6-AMP-lysine intermediate of the active site. NAD(+) is bound by residues Arg136, Glu173, Lys297, and Lys321. Zn(2+) is bound by residues Cys415, Cys418, Cys433, and Cys438. The 79-residue stretch at 607–685 (QEKLQFSGKT…EQELMTLISN (79 aa)) folds into the BRCT domain.

The protein belongs to the NAD-dependent DNA ligase family. LigA subfamily. Mg(2+) is required as a cofactor. The cofactor is Mn(2+).

The catalysed reaction is NAD(+) + (deoxyribonucleotide)n-3'-hydroxyl + 5'-phospho-(deoxyribonucleotide)m = (deoxyribonucleotide)n+m + AMP + beta-nicotinamide D-nucleotide.. Functionally, DNA ligase that catalyzes the formation of phosphodiester linkages between 5'-phosphoryl and 3'-hydroxyl groups in double-stranded DNA using NAD as a coenzyme and as the energy source for the reaction. It is essential for DNA replication and repair of damaged DNA. This is DNA ligase from Prochlorococcus marinus (strain SARG / CCMP1375 / SS120).